We begin with the raw amino-acid sequence, 319 residues long: Acetyl-coenzyme A carboxylase carboxyl transferase subunit alpha (319 aa).

Residues 35 to 296 (NIDEEVHRLR…KAQLLADLAD (262 aa)) form the CoA carboxyltransferase C-terminal domain.

This sequence belongs to the AccA family. Acetyl-CoA carboxylase is a heterohexamer composed of biotin carboxyl carrier protein (AccB), biotin carboxylase (AccC) and two subunits each of ACCase subunit alpha (AccA) and ACCase subunit beta (AccD).

The protein resides in the cytoplasm. The enzyme catalyses N(6)-carboxybiotinyl-L-lysyl-[protein] + acetyl-CoA = N(6)-biotinyl-L-lysyl-[protein] + malonyl-CoA. It functions in the pathway lipid metabolism; malonyl-CoA biosynthesis; malonyl-CoA from acetyl-CoA: step 1/1. Component of the acetyl coenzyme A carboxylase (ACC) complex. First, biotin carboxylase catalyzes the carboxylation of biotin on its carrier protein (BCCP) and then the CO(2) group is transferred by the carboxyltransferase to acetyl-CoA to form malonyl-CoA. The sequence is that of Acetyl-coenzyme A carboxylase carboxyl transferase subunit alpha from Klebsiella pneumoniae subsp. pneumoniae (strain ATCC 700721 / MGH 78578).